We begin with the raw amino-acid sequence, 227 residues long: Small ribosomal subunit protein uS3 (227 aa).

The KH type-2 domain occupies 39–107; it reads VREFLDKRLV…PVHINIEEVR (69 aa).

This sequence belongs to the universal ribosomal protein uS3 family. As to quaternary structure, part of the 30S ribosomal subunit. Forms a tight complex with proteins S10 and S14.

Its function is as follows. Binds the lower part of the 30S subunit head. Binds mRNA in the 70S ribosome, positioning it for translation. This is Small ribosomal subunit protein uS3 from Marinobacter nauticus (strain ATCC 700491 / DSM 11845 / VT8) (Marinobacter aquaeolei).